The chain runs to 494 residues: Protein DETOXIFICATION 22 (494 aa).

12 helical membrane-spanning segments follow: residues 40–60 (LWVV…VSLV), 78–98 (ITFT…ASAL), 123–143 (IVLT…GPIL), 159–179 (IALW…CQIF), 188–208 (IIAY…WLLV), 217–237 (GAMT…LLYV), 268–288 (GGMV…TGNL), 299–319 (AICI…LAAV), 340–360 (IVAV…FLFL), 384–404 (LLAF…VAVG), 416–436 (LACY…VVGL), and 441–461 (VWIG…IMTL).

This sequence belongs to the multi antimicrobial extrusion (MATE) (TC 2.A.66.1) family.

It is found in the membrane. This is Protein DETOXIFICATION 22 from Arabidopsis thaliana (Mouse-ear cress).